A 230-amino-acid chain; its full sequence is Flagellar L-ring protein (230 aa).

The N-terminal stretch at 1 to 15 is a signal peptide; it reads MSRLPSLSRLCLAIA. A lipid anchor (N-palmitoyl cysteine) is attached at C16. C16 is lipidated: S-diacylglycerol cysteine.

The protein belongs to the FlgH family. In terms of assembly, the basal body constitutes a major portion of the flagellar organelle and consists of four rings (L,P,S, and M) mounted on a central rod.

The protein resides in the cell outer membrane. It localises to the bacterial flagellum basal body. Its function is as follows. Assembles around the rod to form the L-ring and probably protects the motor/basal body from shearing forces during rotation. This chain is Flagellar L-ring protein, found in Xanthomonas euvesicatoria pv. vesicatoria (strain 85-10) (Xanthomonas campestris pv. vesicatoria).